Consider the following 207-residue polypeptide: Ribosomal RNA small subunit methyltransferase G (207 aa).

S-adenosyl-L-methionine is bound by residues Gly75, Met80, 126-127 (VE), and Arg141.

The protein belongs to the methyltransferase superfamily. RNA methyltransferase RsmG family.

Its subcellular location is the cytoplasm. The enzyme catalyses guanosine(527) in 16S rRNA + S-adenosyl-L-methionine = N(7)-methylguanosine(527) in 16S rRNA + S-adenosyl-L-homocysteine. Functionally, specifically methylates the N7 position of guanine in position 527 of 16S rRNA. The protein is Ribosomal RNA small subunit methyltransferase G of Laribacter hongkongensis (strain HLHK9).